Here is a 1001-residue protein sequence, read N- to C-terminus: Non-canonical poly(A) RNA polymerase protein Trf4-1 (1001 aa).

Low complexity-rich tracts occupy residues 44–86 (TING…NNSS) and 127–163 (RNST…STNG). Disordered regions lie at residues 44–92 (TING…PYLS) and 115–238 (QQQQ…AGGA). A compositionally biased stretch (gly residues) spans 164–178 (PGAGTGTSTGAGGTG). Residues 179-216 (TNSPATTASSTAATTTGPATSMSDTSNNPPQSTTTPAS) are compositionally biased toward low complexity. Residues aspartate 328 and aspartate 330 each coordinate Mn(2+). Positions 458 to 517 (NLGVLLLEFFELYGRRFNYMKIGISIKNGGRYMPKDELQRDMVDGHRPSLLCIEDPLTPG) constitute a PAP-associated domain. 4 disordered regions span residues 631–652 (PTAH…PGAH), 687–740 (QQQQ…AQEV), 767–963 (ASNS…LRGT), and 977–1001 (SSES…RDER). Basic residues predominate over residues 635 to 649 (GHSHAHSHSHGHAHP). Low complexity-rich tracts occupy residues 687–708 (QQQQ…NQSQ) and 768–788 (SNSW…TGSS). Residues 827-841 (VGTGSNRGGGDGSGG) are compositionally biased toward gly residues. Positions 844-854 (YNQRNNHNSSG) are enriched in polar residues. Positions 855–880 (YYHQQYYVPPPMQQQLSKSNSSSNYH) are enriched in low complexity. A compositionally biased stretch (basic residues) spans 881–912 (QQHHHSHSHGNHSHRQQHHHQQQHHHQQRPQH). Low complexity-rich tracts occupy residues 932 to 955 (SAGN…SNNS) and 977 to 992 (SSES…SSRS).

It belongs to the DNA polymerase type-B-like family. The cofactor is Mn(2+).

It localises to the cytoplasm. The catalysed reaction is RNA(n) + ATP = RNA(n)-3'-adenine ribonucleotide + diphosphate. Involved in a post-transcriptional quality control mechanism limiting inappropriate expression of genetic information. Polyadenylation is required for the degradative activity of the exosome on several of its nuclear RNA substrates. Polyadenylates RNA processing and degradation intermediates of snRNAs and mRNAs. This is Non-canonical poly(A) RNA polymerase protein Trf4-1 from Drosophila melanogaster (Fruit fly).